We begin with the raw amino-acid sequence, 156 residues long: Ribosomal RNA large subunit methyltransferase H (156 aa).

Residues Leu73, Gly104, and Ile123–Leu128 each bind S-adenosyl-L-methionine.

It belongs to the RNA methyltransferase RlmH family. As to quaternary structure, homodimer.

It localises to the cytoplasm. It carries out the reaction pseudouridine(1915) in 23S rRNA + S-adenosyl-L-methionine = N(3)-methylpseudouridine(1915) in 23S rRNA + S-adenosyl-L-homocysteine + H(+). Functionally, specifically methylates the pseudouridine at position 1915 (m3Psi1915) in 23S rRNA. This is Ribosomal RNA large subunit methyltransferase H from Herminiimonas arsenicoxydans.